The chain runs to 407 residues: GTPase Obg (407 aa).

In terms of domain architecture, Obg spans 1 to 159; the sequence is MKFVDEVSIR…RDLKLEMKVL (159 aa). The segment at 128–148 is disordered; it reads TRFKSSTNRAPRQTTPGKPGE. A compositionally biased stretch (polar residues) spans 129 to 143; the sequence is RFKSSTNRAPRQTTP. Residues 160–333 enclose the OBG-type G domain; sequence ADVGLLGLPN…LTRDIMRYLE (174 aa). Residues 166 to 173, 191 to 195, 213 to 216, 283 to 286, and 314 to 316 each bind GTP; these read GLPNAGKS, FTTLV, DIPG, NKCD, and SAI. Positions 173 and 193 each coordinate Mg(2+). Residues 376 to 407 are disordered; sequence SGVKSVHDIGDDDWDEEDVDDEDGPEIIYVRD. The segment covering 385-400 has biased composition (acidic residues); sequence GDDDWDEEDVDDEDGP.

The protein belongs to the TRAFAC class OBG-HflX-like GTPase superfamily. OBG GTPase family. As to quaternary structure, monomer. The cofactor is Mg(2+).

The protein localises to the cytoplasm. An essential GTPase which binds GTP, GDP and possibly (p)ppGpp with moderate affinity, with high nucleotide exchange rates and a fairly low GTP hydrolysis rate. Plays a role in control of the cell cycle, stress response, ribosome biogenesis and in those bacteria that undergo differentiation, in morphogenesis control. The polypeptide is GTPase Obg (Pseudomonas fluorescens (strain Pf0-1)).